A 197-amino-acid polypeptide reads, in one-letter code: Protein lin-7 homolog C (197 aa).

The residue at position 2 (A2) is an N-acetylalanine. A Kinase interacting site motif is present at residues A2–D13. The 56-residue stretch at L10–S65 folds into the L27 domain. In terms of domain architecture, PDZ spans V93–P175.

The protein belongs to the lin-7 family. As to quaternary structure, forms a complex with CASK and APBA1 or CASKIN1. Component of the brain-specific heterotrimeric complex (LIN-10-LIN-2-LIN-7 complex) composed of at least APBA1, CASK, and LIN7, which associates with the motor protein KIF17 to transport vesicles along microtubules. Can also interact with other modular proteins containing protein-protein interaction domains like PALS1, PALS2, MPP7, DLG1, DLG2 and DLG3 through its L27 domain. Interacts with DLG4 and GRIN2B as well as CDH1 and CTNNB1, the channels KCNJ12/Kir2.2, KCNJ4/Kir2.3 and probably KCNJ2/Kir2.1 and SLC6A12/BGT-1 via its PDZ domain. The association of LIN7A with cadherin and beta-catenin is calcium-dependent, occurs at synaptic junctions and requires the actin cytoskeleton. Interacts with EGFR, ERBB2, ERBB3 and ERBB4 with both PDZ and KID domains. Associates with KIF17 via APBA1. Interacts with HTR4. Forms a tripartite complex composed of DLG1, MPP7 and LIN7 (LIN7A or LIN7C). Interacts with MAPK12.

It is found in the cell membrane. The protein localises to the basolateral cell membrane. It localises to the cell junction. Its subcellular location is the postsynaptic density membrane. The protein resides in the tight junction. It is found in the synapse. The protein localises to the synaptosome. Plays a role in establishing and maintaining the asymmetric distribution of channels and receptors at the plasma membrane of polarized cells. Forms membrane-associated multiprotein complexes that may regulate delivery and recycling of proteins to the correct membrane domains. The tripartite complex composed of LIN7 (LIN7A, LIN7B or LIN7C), CASK and APBA1 associates with the motor protein KIF17 to transport vesicles containing N-methyl-D-aspartate (NMDA) receptor subunit NR2B along microtubules. This complex may have the potential to couple synaptic vesicle exocytosis to cell adhesion in brain. Ensures the proper localization of GRIN2B (subunit 2B of the NMDA receptor) to neuronal postsynaptic density and may function in localizing synaptic vesicles at synapses where it is recruited by beta-catenin and cadherin. Required to localize Kir2 channels, GABA transporter (SLC6A12) and EGFR/ERBB1, ERBB2, ERBB3 and ERBB4 to the basolateral membrane of epithelial cells. The chain is Protein lin-7 homolog C (LIN7C) from Bos taurus (Bovine).